The chain runs to 632 residues: Glycerophosphodiester phosphodiesterase domain-containing protein 4 (632 aa).

Residues 1-64 (MEETQDSSSS…GSCCCSRKEQ (64 aa)) lie on the Cytoplasmic side of the membrane. The chain crosses the membrane as a helical span at residues 65–85 (FFYMCLVIAFILSVLFLFVWV). The Extracellular portion of the chain corresponds to 86–114 (ETSNEYNGFDWVVYLGTGCWFFWSILVLS). The chain crosses the membrane as a helical span at residues 115–135 (AAGIMVAYTTLLLLLGFLLLW). Over 136–147 (ERIELNLHTSHK) the chain is Cytoplasmic. Residues 148-168 (VFICLVIVLCSFLLAVLSHFW) form a helical membrane-spanning segment. At 169 to 180 (KDKWLIAGLSLQ) the chain is on the extracellular side. The helical transmembrane segment at 181–201 (IFAPFVHLSLITVMIIISWPL) threads the bilayer. Over 202-240 (SICVARLESEVKVRRYRMADYEQEIQERCNVFQRLRALQ) the chain is Cytoplasmic. Residues 241–261 (IAAGLSFLIILLCLYLMPLGI) traverse the membrane as a helical segment. Residues 262–542 (YSPCILKKEN…SRPLFFMTPG (281 aa)) lie on the Extracellular side of the membrane. The 258-residue stretch at 276 to 533 (PTLFGHRGAP…DNIELLNQLS (258 aa)) folds into the GP-PDE domain. A divalent metal cation is bound by residues glutamate 308, aspartate 310, and histidine 323. N-linked (GlcNAc...) asparagine glycans are attached at residues asparagine 343, asparagine 349, asparagine 384, and asparagine 473. Residues 543-563 (FYMFMWLFLDIASAVIIGFVF) form a helical membrane-spanning segment. At 564–632 (CYNWIKEIKR…QKTEPKTENL (69 aa)) the chain is on the cytoplasmic side. The segment at 596 to 632 (ENNDASQQKPEVAPTSANLAPENMIELQKTEPKTENL) is disordered. Basic and acidic residues predominate over residues 623–632 (QKTEPKTENL).

The protein belongs to the glycerophosphoryl diester phosphodiesterase family. In terms of tissue distribution, detected in testis, in particular in spermatocytes.

Its subcellular location is the cytoplasm. The protein localises to the membrane. The chain is Glycerophosphodiester phosphodiesterase domain-containing protein 4 (Gdpd4) from Mus musculus (Mouse).